A 98-amino-acid polypeptide reads, in one-letter code: Citrate lyase acyl carrier protein (98 aa).

Ser-14 bears the O-(phosphoribosyl dephospho-coenzyme A)serine mark.

This sequence belongs to the CitD family. Oligomer with a subunit composition of (alpha,beta,gamma)6.

It is found in the cytoplasm. Covalent carrier of the coenzyme of citrate lyase. This Shigella flexneri protein is Citrate lyase acyl carrier protein.